The primary structure comprises 698 residues: MRFAVGALLACAALGLCLAVPDKTVKWCAVSEHENTKCISFRDHMKTVLPADGPRLACVKKTSYQDCIKAISGGEADAITLDGGWVYDAGLTPNNLKPVAAEFYGSLEHPQTHYLAVAVVKKGTDFQLNQLQGKKSCHTGLGRSAGWIIPIGLLFCNLPEPRKPLEKAVASFFSGSCVPCADPVAFPQLCQLCPGCGCSPTQPFFGYVGAFKCLRDGGGDVAFVKHTTIFEVLPQKADRDQYELLCLDNTRKPVDQYEDCYLARIPSHAVVARNGDGKEDLIWEILKVAQEHFGKGKSKDFQLFGSPLGKDLLFKDSAFGLLRVPPRMDYRLYLGHSYVTAIRNQREGVCPEGSIDSAPVKWCALSHQERAKCDEWSVSSNGQIECESAESTEDCIDKIVNGEADAMSLDGGHAYIAGQCGLVPVMAENYDISSCTNPQSDVFPKGYYAVAVVKASDSSINWNNLKGKKSCHTGVDRTAGWNIPMGLLFSRINHCKFDEFFSQGCAPGYKKNSTLCDLCIGPAKCAPNNREGYNGYTGAFQCLVEKGDVAFVKHQTVLENTNGKNTAAWAKDLKQEDFQLLCPDGTKKPVTEFATCHLAQAPNHVVVSRKEKAARVSTVLTAQKDLFWKGDKDCTGNFCLFRSSTKDLLFRDDTKCLTKLPEGTTYEEYLGAEYLQAVGNIRKCSTSRLLEACTFHKS.

The first 19 residues, 1–19 (MRFAVGALLACAALGLCLA), serve as a signal peptide directing secretion. 2 consecutive Transferrin-like domains span residues 25–347 (VKWC…NQRE) and 360–683 (VKWC…NIRK). Cystine bridges form between cysteine 28/cysteine 67 and cysteine 38/cysteine 58. Arginine 42 carries the dimethylated arginine modification. The Fe(3+) site is built by aspartate 82 and tyrosine 114. 8 disulfides stabilise this stretch: cysteine 137/cysteine 213, cysteine 156/cysteine 350, cysteine 177/cysteine 193, cysteine 180/cysteine 196, cysteine 190/cysteine 198, cysteine 246/cysteine 260, cysteine 363/cysteine 395, and cysteine 373/cysteine 386. Hydrogencarbonate-binding residues include threonine 139, arginine 143, alanine 145, and glycine 146. Tyrosine 207 lines the Fe(3+) pocket. Histidine 268 contributes to the Fe(3+) binding site. Serine 388 bears the Phosphoserine mark. Residues aspartate 410 and tyrosine 447 each coordinate Fe(3+). 8 disulfides stabilise this stretch: cysteine 420-cysteine 693, cysteine 435-cysteine 656, cysteine 471-cysteine 542, cysteine 495-cysteine 684, cysteine 505-cysteine 519, cysteine 516-cysteine 525, cysteine 582-cysteine 596, and cysteine 634-cysteine 639. The hydrogencarbonate site is built by threonine 473, arginine 477, alanine 479, and glycine 480. A glycan (N-linked (GlcNAc...) asparagine) is linked at asparagine 512. Position 536 (tyrosine 536) interacts with Fe(3+). Fe(3+) is bound at residue histidine 604. Phosphoserine is present on serine 685.

This sequence belongs to the transferrin family. Monomer. Part of a complex composed of SLC40A1/ferroportin, TF/transferrin and HEPH/hephaestin that transfers iron from cells to transferrin. Expressed by the liver and secreted in plasma.

It is found in the secreted. Its function is as follows. Transferrins are iron binding transport proteins which can bind two Fe(3+) ions in association with the binding of an anion, usually bicarbonate. It is responsible for the transport of iron from sites of absorption and heme degradation to those of storage and utilization. Serum transferrin may also have a further role in stimulating cell proliferation. This chain is Serotransferrin (Tf), found in Rattus norvegicus (Rat).